We begin with the raw amino-acid sequence, 490 residues long: Myocilin (490 aa).

Residues M1 to A18 form the signal peptide. Residues G51–Q170 are a coiled coil. A disordered region spans residues L152–R186. A compositionally biased stretch (polar residues) spans Q173–P182. The Olfactomedin-like domain maps to G230–R489. Residues C231 and C419 are joined by a disulfide bond. Ca(2+) is bound by residues D366, N414, A415, I463, and D464. A Microbody targeting signal motif is present at residues S488 to L490.

Homodimer (via N-terminus). Can also form higher oligomers. Interacts with OLFM3, FN1, NRCAM, GLDN and NFASC. Interacts (via N-terminus) with MYL2. Interacts with SFRP1, FRZB, FZD7, FZD10, FZD1 and WIF1; regulates Wnt signaling. Interacts with SNTA1; regulates muscle hypertrophy. Interacts with ERBB2 and ERBB3; activates ERBB2-ERBB3 signaling pathway. Interacts with SNCG; affects its secretion and its aggregation. In terms of processing, palmitoylated. Undergoes a calcium-dependent proteolytic cleavage at Gln-212 by CAPN2 in the endoplasmic reticulum. The result is the production of two fragments, one of 35 kDa containing the C-terminal olfactomedin-like domain, and another of 20 kDa containing the N-terminal leucine zipper-like domain. Post-translationally, glycosylated. As to expression, the myocilin 35 kDa fragment is detected in iris and ciliary body.

The protein localises to the secreted. The protein resides in the golgi apparatus. It localises to the cytoplasmic vesicle. It is found in the extracellular space. Its subcellular location is the extracellular matrix. The protein localises to the extracellular exosome. The protein resides in the mitochondrion. It localises to the mitochondrion intermembrane space. It is found in the mitochondrion inner membrane. Its subcellular location is the mitochondrion outer membrane. The protein localises to the rough endoplasmic reticulum. The protein resides in the cell projection. It localises to the cilium. It is found in the endoplasmic reticulum. In terms of biological role, secreted glycoprotein regulating the activation of different signaling pathways in adjacent cells to control different processes including cell adhesion, cell-matrix adhesion, cytoskeleton organization and cell migration. Promotes substrate adhesion, spreading and formation of focal contacts. Negatively regulates cell-matrix adhesion and stress fiber assembly through Rho protein signal transduction. Modulates the organization of actin cytoskeleton by stimulating the formation of stress fibers through interactions with components of Wnt signaling pathways. Promotes cell migration through activation of PTK2 and the downstream phosphatidylinositol 3-kinase signaling. Plays a role in bone formation and promotes osteoblast differentiation in a dose-dependent manner through mitogen-activated protein kinase signaling. Mediates myelination in the peripheral nervous system through ERBB2/ERBB3 signaling. Plays a role as a regulator of muscle hypertrophy through the components of dystrophin-associated protein complex. Involved in positive regulation of mitochondrial depolarization. Plays a role in neurite outgrowth. May participate in the obstruction of fluid outflow in the trabecular meshwork. This Bos taurus (Bovine) protein is Myocilin (MYOC).